The chain runs to 480 residues: Glycogen synthase (480 aa).

The protein belongs to the glycosyltransferase 1 family. Bacterial/plant glycogen synthase subfamily.

It catalyses the reaction [(1-&gt;4)-alpha-D-glucosyl](n) + ADP-alpha-D-glucose = [(1-&gt;4)-alpha-D-glucosyl](n+1) + ADP + H(+). It functions in the pathway glycan biosynthesis; glycogen biosynthesis. Functionally, synthesizes alpha-1,4-glucan chains using ADP-glucose. The protein is Glycogen synthase of Rhizobium etli (strain ATCC 51251 / DSM 11541 / JCM 21823 / NBRC 15573 / CFN 42).